Reading from the N-terminus, the 357-residue chain is 3-isopropylmalate dehydrogenase (357 aa).

4 residues coordinate substrate: Arg97, Arg107, Arg135, and Asp224. Residues Asp224, Asp248, and Asp252 each contribute to the Mg(2+) site. 282 to 294 (GSAPDIAGQDLAN) contacts NAD(+).

It belongs to the isocitrate and isopropylmalate dehydrogenases family. LeuB type 1 subfamily. In terms of assembly, homodimer. It depends on Mg(2+) as a cofactor. The cofactor is Mn(2+).

It is found in the cytoplasm. The catalysed reaction is (2R,3S)-3-isopropylmalate + NAD(+) = 4-methyl-2-oxopentanoate + CO2 + NADH. It functions in the pathway amino-acid biosynthesis; L-leucine biosynthesis; L-leucine from 3-methyl-2-oxobutanoate: step 3/4. Functionally, catalyzes the oxidation of 3-carboxy-2-hydroxy-4-methylpentanoate (3-isopropylmalate) to 3-carboxy-4-methyl-2-oxopentanoate. The product decarboxylates to 4-methyl-2 oxopentanoate. This is 3-isopropylmalate dehydrogenase from Prochlorococcus marinus (strain MIT 9313).